Reading from the N-terminus, the 532-residue chain is Fatty-acid amide hydrolase 2 (532 aa).

A helical transmembrane segment spans residues 11 to 31; sequence LFLLRALGFLIGLVGRAALVL. Catalysis depends on charge relay system residues Lys-131 and Ser-206. Residue Ser-230 is the Acyl-ester intermediate of the active site.

This sequence belongs to the amidase family. As to quaternary structure, homodimer. Expressed in kidney, liver, lung, prostate, heart and ovary.

Its subcellular location is the membrane. It localises to the lipid droplet. It carries out the reaction N-(5Z,8Z,11Z,14Z-eicosatetraenoyl)-ethanolamine + H2O = ethanolamine + (5Z,8Z,11Z,14Z)-eicosatetraenoate. The enzyme catalyses (9Z)-octadecenamide + H2O = (9Z)-octadecenoate + NH4(+). The catalysed reaction is N-(9Z-octadecenoyl) ethanolamine + H2O = ethanolamine + (9Z)-octadecenoate. It catalyses the reaction N-hexadecanoylethanolamine + H2O = ethanolamine + hexadecanoate. With respect to regulation, inhibited by O-aryl carbamates and alpha-keto heterocytes. Catalyzes the hydrolysis of endogenous amidated lipids like the sleep-inducing lipid oleamide ((9Z)-octadecenamide), the endocannabinoid anandamide (N-(5Z,8Z,11Z,14Z-eicosatetraenoyl)-ethanolamine), as well as other fatty amides, to their corresponding fatty acids, thereby regulating the signaling functions of these molecules. Hydrolyzes monounsaturated substrate anandamide preferentially as compared to polyunsaturated substrates. The chain is Fatty-acid amide hydrolase 2 (FAAH2) from Homo sapiens (Human).